The primary structure comprises 177 residues: Large ribosomal subunit protein uL6 (177 aa).

Belongs to the universal ribosomal protein uL6 family. In terms of assembly, part of the 50S ribosomal subunit.

In terms of biological role, this protein binds to the 23S rRNA, and is important in its secondary structure. It is located near the subunit interface in the base of the L7/L12 stalk, and near the tRNA binding site of the peptidyltransferase center. The sequence is that of Large ribosomal subunit protein uL6 from Methylobacterium sp. (strain 4-46).